The sequence spans 224 residues: tRNA (guanine-N(7)-)-methyltransferase (224 aa).

Glu57, Asp82, and Asp109 together coordinate S-adenosyl-L-methionine. Position 167 (Asp167) interacts with substrate.

It belongs to the class I-like SAM-binding methyltransferase superfamily. TrmB family.

It catalyses the reaction guanosine(46) in tRNA + S-adenosyl-L-methionine = N(7)-methylguanosine(46) in tRNA + S-adenosyl-L-homocysteine. Its pathway is tRNA modification; N(7)-methylguanine-tRNA biosynthesis. Catalyzes the formation of N(7)-methylguanine at position 46 (m7G46) in tRNA. The polypeptide is tRNA (guanine-N(7)-)-methyltransferase (Chloroflexus aurantiacus (strain ATCC 29366 / DSM 635 / J-10-fl)).